Consider the following 445-residue polypeptide: Phosphoglucosamine mutase (445 aa).

Residue Ser-101 is the Phosphoserine intermediate of the active site. Positions 101, 240, 242, and 244 each coordinate Mg(2+). Phosphoserine is present on Ser-101.

Belongs to the phosphohexose mutase family. Requires Mg(2+) as cofactor. Post-translationally, activated by phosphorylation.

The catalysed reaction is alpha-D-glucosamine 1-phosphate = D-glucosamine 6-phosphate. Catalyzes the conversion of glucosamine-6-phosphate to glucosamine-1-phosphate. The sequence is that of Phosphoglucosamine mutase from Pseudomonas fluorescens (strain ATCC BAA-477 / NRRL B-23932 / Pf-5).